The following is a 300-amino-acid chain: PTB domain-containing engulfment adapter protein 1 (300 aa).

Residues 21–176 enclose the PID domain; it reads AKHFIPYNAK…GGLQKRIQDL (156 aa). Residues 160-199 are a coiled coil; sequence VETRKQIGGLQKRIQDLETENVELKKQLQVLEEQLMIAQV.

Belongs to the ced-6 family.

It localises to the cytoplasm. In terms of biological role, may function as an adapter protein. Required for efficient phagocytosis of apoptotic cells. May play a role in the internalization and endosomal trafficking of various lrp1 ligands. The chain is PTB domain-containing engulfment adapter protein 1 (gulp1) from Danio rerio (Zebrafish).